A 224-amino-acid polypeptide reads, in one-letter code: 3-dehydroquinate dehydratase (224 aa).

Residues Glu30–Arg32 and Arg62 each bind 3-dehydroquinate. His118 functions as the Proton donor/acceptor in the catalytic mechanism. The Schiff-base intermediate with substrate role is filled by Lys143. 3 residues coordinate 3-dehydroquinate: Arg186, Ser205, and Gln209.

It belongs to the type-I 3-dehydroquinase family. Homodimer.

The catalysed reaction is 3-dehydroquinate = 3-dehydroshikimate + H2O. It functions in the pathway metabolic intermediate biosynthesis; chorismate biosynthesis; chorismate from D-erythrose 4-phosphate and phosphoenolpyruvate: step 3/7. Its function is as follows. Involved in the third step of the chorismate pathway, which leads to the biosynthesis of aromatic amino acids. Catalyzes the cis-dehydration of 3-dehydroquinate (DHQ) and introduces the first double bond of the aromatic ring to yield 3-dehydroshikimate. In Streptococcus suis (strain 98HAH33), this protein is 3-dehydroquinate dehydratase.